The primary structure comprises 622 residues: Carbon monoxide dehydrogenase (622 aa).

Positions 40, 49, 52, 57, and 68 each coordinate [4Fe-4S] cluster. The [Ni-4Fe-5S] cluster site is built by His-256, Cys-334, Cys-442, Cys-473, and Cys-514.

The protein belongs to the Ni-containing carbon monoxide dehydrogenase family. As to quaternary structure, homodimer. [4Fe-4S] cluster is required as a cofactor. Requires [Ni-4Fe-5S] cluster as cofactor.

It catalyses the reaction CO + 2 oxidized [2Fe-2S]-[ferredoxin] + H2O = 2 reduced [2Fe-2S]-[ferredoxin] + CO2 + 2 H(+). In terms of biological role, CODH oxidizes carbon monoxide coupled, via CooF, to the reduction of a hydrogen cation by a hydrogenase (possibly CooH). This Archaeoglobus fulgidus (strain ATCC 49558 / DSM 4304 / JCM 9628 / NBRC 100126 / VC-16) protein is Carbon monoxide dehydrogenase (cooS).